The sequence spans 132 residues: Large ribosomal subunit protein uL14 (132 aa).

This sequence belongs to the universal ribosomal protein uL14 family. Part of the 50S ribosomal subunit. Forms a cluster with proteins L3 and L24e, part of which may contact the 16S rRNA in 2 intersubunit bridges.

Binds to 23S rRNA. Forms part of two intersubunit bridges in the 70S ribosome. In Methanococcus maripaludis (strain C5 / ATCC BAA-1333), this protein is Large ribosomal subunit protein uL14.